The primary structure comprises 480 residues: Sestrin-2 (480 aa).

At Met1 the chain carries N-acetylmethionine. Residues 20–43 (RGGVAGPETREEHREGQARRGSRG) are disordered. Residues 27 to 37 (ETREEHREGQA) show a composition bias toward basic and acidic residues. An N-terminal domain; mediates the alkylhydroperoxide reductase activity region spans residues 66 to 239 (GLEALMSSGR…APSPPSEQGT (174 aa)). The active-site Cysteine sulfenic acid (-SOH) intermediate is the Cys125. A Glycyl lysine isopeptide (Lys-Gly) (interchain with G-Cter in ubiquitin) cross-link involves residue Lys175. Disordered stretches follow at residues 221-251 (DAEG…NSGG) and 272-291 (LLRD…ELEK). Residues 223–238 (EGSPASQAPSPPSEQG) are compositionally biased toward low complexity. Ser249 bears the Phosphoserine mark. Residues 308 to 480 (PHPDILCFVE…ALRAITRYMT (173 aa)) are C-terminal domain; mediates TORC1 regulation. L-leucine contacts are provided by residues 374–377 (TYNT), Thr386, and Glu451.

Belongs to the sestrin family. As to quaternary structure, interacts with the GATOR2 complex which is composed of MIOS, SEC13, SEH1L, WDR24 and WDR59; the interaction is negatively regulated by leucine. Conveys leucine availability via direct interaction with SEH1L and WDR24 components of the GATOR2 complex. Interacts with RRAGA, RRAGB, RRAGC and RRAGD; may function as a guanine nucleotide dissociation inhibitor for RRAGs and regulate them. May interact with the TORC2 complex. Interacts with KEAP1, RBX1, SQSTM and ULK1; to regulate the degradation of KEAP1. May also associate with the complex composed of TSC1, TSC2 and the AMP-responsive protein kinase/AMPK to regulate TORC1 signaling. May interact with PRDX1. In terms of processing, phosphorylated by ULK1 at multiple sites. Ubiquitinated at Lys-175 by RNF167 via 'Lys-63'-linked polyubiquitination in response to leucine deprivation: ubiquitination promotes SESN2-interaction with the GATOR2 complex, leading to inhibit the TORC1 signaling pathway. Deubiquitinated at Lys-175 by STAMBPL1, promoting the TORC1 signaling pathway. Ubiquitinated by RNF186; ubiquitination mediates proteasomal degradation. In terms of tissue distribution, detected in heart, liver and skeletal muscles (at protein level).

The protein localises to the cytoplasm. It catalyses the reaction a hydroperoxide + L-cysteinyl-[protein] = S-hydroxy-L-cysteinyl-[protein] + an alcohol. Functionally, functions as an intracellular leucine sensor that negatively regulates the mTORC1 signaling pathway through the GATOR complex. In absence of leucine, binds the GATOR subcomplex GATOR2 and prevents mTORC1 signaling. Binding of leucine to SESN2 disrupts its interaction with GATOR2 thereby activating the TORC1 signaling pathway. This stress-inducible metabolic regulator also plays a role in protection against oxidative and genotoxic stresses. May negatively regulate protein translation in response to endoplasmic reticulum stress, via mTORC1. May positively regulate the transcription by NFE2L2 of genes involved in the response to oxidative stress by facilitating the SQSTM1-mediated autophagic degradation of KEAP1. May also mediate TP53 inhibition of TORC1 signaling upon genotoxic stress. Moreover, may prevent the accumulation of reactive oxygen species (ROS) through the alkylhydroperoxide reductase activity born by the N-terminal domain of the protein. Was originally reported to contribute to oxidative stress resistance by reducing PRDX1. However, this could not be confirmed. The polypeptide is Sestrin-2 (Mus musculus (Mouse)).